The primary structure comprises 350 residues: UDP-rhamnose/UDP-galactose transporter 3 (350 aa).

Transmembrane regions (helical) follow at residues 12 to 32, 41 to 61, 81 to 101, 104 to 124, 133 to 153, 160 to 180, 200 to 220, 224 to 244, 257 to 277, and 286 to 306; these read AVSDMGAWAMNVISSVGIIMA, GFAFSFATTLTGFHFALTALV, LIWFSIVANVSIAAMNFSLML, VGFYQISKLSMIPVVCVMEWI, EVKISVVVVVVGVGICTVTDV, FICACVAIFSSSLQQILIGSL, AFSLLVVGPLVDYLLSGKFIM, MSSGCFLFILLSCGLAVFCNI, SFQVIGHMKTVCILTLGWLLF, and VAGMIVAIVGMVIYSWAMELE.

The protein belongs to the TPT transporter family. TPT (TC 2.A.7.9) subfamily.

It localises to the golgi apparatus membrane. Functionally, nucleotide-sugar transporter that transports UDP-rhamnose or UDP-galactose and UMP in a strict counter-exchange mode. The polypeptide is UDP-rhamnose/UDP-galactose transporter 3 (Arabidopsis thaliana (Mouse-ear cress)).